We begin with the raw amino-acid sequence, 505 residues long: Probable cytosol aminopeptidase (505 aa).

Positions 269 and 274 each coordinate Mn(2+). The active site involves lysine 281. The Mn(2+) site is built by aspartate 292, aspartate 351, and glutamate 353. Arginine 355 is an active-site residue.

This sequence belongs to the peptidase M17 family. Mn(2+) serves as cofactor.

It is found in the cytoplasm. The catalysed reaction is Release of an N-terminal amino acid, Xaa-|-Yaa-, in which Xaa is preferably Leu, but may be other amino acids including Pro although not Arg or Lys, and Yaa may be Pro. Amino acid amides and methyl esters are also readily hydrolyzed, but rates on arylamides are exceedingly low.. It catalyses the reaction Release of an N-terminal amino acid, preferentially leucine, but not glutamic or aspartic acids.. In terms of biological role, presumably involved in the processing and regular turnover of intracellular proteins. Catalyzes the removal of unsubstituted N-terminal amino acids from various peptides. In Rhodococcus erythropolis (strain PR4 / NBRC 100887), this protein is Probable cytosol aminopeptidase.